The following is a 931-amino-acid chain: Synaptopodin (931 aa).

2 disordered regions span residues Glu56–Ile78 and Ala113–Tyr243. Residue Ser134 is modified to Phosphoserine. The segment covering Thr136 to Gln148 has biased composition (basic and acidic residues). 2 stretches are compositionally biased toward polar residues: residues Gln153 to Gly164 and Pro188 to Pro200. Phosphoserine is present on residues Ser202, Ser222, and Ser258. The span at Pro214–Ser232 shows a compositional bias: low complexity. The disordered stretch occupies residues Gly280–Leu420. Composition is skewed to polar residues over residues His282–Ser293 and Ile309–Ser370. Residues Asp373–Arg384 are compositionally biased toward basic and acidic residues. 2 positions are modified to phosphoserine: Ser490 and Ser514. Disordered regions lie at residues Arg542 to Val591 and Ser691 to Gly711. A Phosphothreonine modification is found at Thr549. Residues Pro551–Tyr554 carry the PPxY motif motif. The span at Glu556–Arg568 shows a compositional bias: polar residues. Residue Ser569 is modified to Phosphoserine. The span at Ser569–Ser580 shows a compositional bias: low complexity. The PPxY motif signature appears at Pro570–Tyr573. Ser691, Ser742, Ser746, and Ser767 each carry phosphoserine. At Thr771 the chain carries Phosphothreonine. The interval Ser775–Gly918 is disordered. Low complexity predominate over residues Ser816–Ser841. Ser835 is modified (phosphoserine). The residue at position 850 (Arg850) is an Omega-N-methylarginine. Ser856 carries the post-translational modification Phosphoserine. Polar residues predominate over residues Val874–Ser895.

It belongs to the synaptopodin family. In terms of assembly, interacts with BAIAP1. Interacts with actin. Interacts (via PPxY motifs) with WWC1 (via WW domains). In terms of processing, O-glycosylated. As to expression, expressed at high levels in brain and at moderate, but still significant levels in the heart, skeletal muscle, lung and kidney. In brain, expressed in the cerebral cortex, hippocampus, olfactory bulb and striatum.

The protein resides in the cytoplasm. The protein localises to the cytoskeleton. It localises to the cell junction. It is found in the tight junction. Its subcellular location is the perikaryon. The protein resides in the cell projection. The protein localises to the dendritic spine. It localises to the postsynaptic density. It is found in the synapse. Its subcellular location is the cytosol. In terms of biological role, actin-associated protein that may play a role in modulating actin-based shape and motility of dendritic spines and renal podocyte foot processes. Seems to be essential for the formation of spine apparatuses in spines of telencephalic neurons, which is involved in synaptic plasticity. This Rattus norvegicus (Rat) protein is Synaptopodin (Synpo).